Consider the following 589-residue polypeptide: Protein NRT1/ PTR FAMILY 7.2 (589 aa).

Transmembrane regions (helical) follow at residues 32 to 52 (WLTA…FFGV) and 78 to 98 (WTGT…SYWG). Thr-102 is modified (phosphothreonine). The next 10 membrane-spanning stretches (helical) occupy residues 105-125 (IFQA…GALL), 147-167 (VLFY…QPNI), 187-207 (IAFF…SNTV), 217-237 (WPLG…LFLI), 343-363 (IWLC…LFVV), 377-397 (IPAS…IFAY), 423-443 (MGIG…VEIH), 464-484 (IFWQ…MYVG), 504-524 (LCMA…SIVM), and 548-568 (FYFL…ICAK).

It belongs to the major facilitator superfamily. Proton-dependent oligopeptide transporter (POT/PTR) (TC 2.A.17) family. As to expression, expressed in xylem parenchyma cells within the vasculature. Expressed in siliques and flowers. Higher expression in shoots than in roots.

It localises to the cell membrane. Functionally, low-affinity nitrate transporter. Involved in nitrate removal from xylem sap. Not involved in oligopeptides transport. This is Protein NRT1/ PTR FAMILY 7.2 (NPF7.2) from Arabidopsis thaliana (Mouse-ear cress).